We begin with the raw amino-acid sequence, 89 residues long: Small ribosomal subunit protein bS18 (89 aa).

The segment covering Met-1–Ala-15 has biased composition (low complexity). Residues Met-1 to Lys-22 are disordered.

It belongs to the bacterial ribosomal protein bS18 family. Part of the 30S ribosomal subunit. Forms a tight heterodimer with protein bS6.

Binds as a heterodimer with protein bS6 to the central domain of the 16S rRNA, where it helps stabilize the platform of the 30S subunit. The sequence is that of Small ribosomal subunit protein bS18 from Caldanaerobacter subterraneus subsp. tengcongensis (strain DSM 15242 / JCM 11007 / NBRC 100824 / MB4) (Thermoanaerobacter tengcongensis).